A 37-amino-acid chain; its full sequence is Photosystem I reaction center subunit IX (37 aa).

Residues 4–24 (FLTTAPVVAAIWFTLTAGILI) form a helical membrane-spanning segment.

Belongs to the PsaJ family.

Its subcellular location is the cellular thylakoid membrane. In terms of biological role, may help in the organization of the PsaE and PsaF subunits. The chain is Photosystem I reaction center subunit IX from Synechococcus sp. (strain WH7803).